Consider the following 147-residue polypeptide: Hemoglobin subunit delta (147 aa).

Residues 3 to 147 (HLTADETALV…VANALAHKYH (145 aa)) enclose the Globin domain. Ser51 carries the post-translational modification Phosphoserine. Residues His64 and His93 each coordinate heme b.

Belongs to the globin family. In terms of assembly, heterotetramer of two delta chains and two alpha chains. In terms of tissue distribution, red blood cells.

In Dugong dugon (Dugong), this protein is Hemoglobin subunit delta (HBD).